Consider the following 291-residue polypeptide: Shikimate dehydrogenase (NADP(+)) (291 aa).

Shikimate is bound by residues 14 to 16 and Thr61; that span reads SKS. Lys65 functions as the Proton acceptor in the catalytic mechanism. Glu77 contributes to the NADP(+) binding site. Shikimate-binding residues include Asn86 and Asp102. NADP(+) contacts are provided by residues 139-143, 164-169, and Leu232; these read GAGGA and NRTFSR. Tyr234 contributes to the shikimate binding site. NADP(+) is bound at residue Gly256.

It belongs to the shikimate dehydrogenase family. As to quaternary structure, homodimer.

The enzyme catalyses shikimate + NADP(+) = 3-dehydroshikimate + NADPH + H(+). The protein operates within metabolic intermediate biosynthesis; chorismate biosynthesis; chorismate from D-erythrose 4-phosphate and phosphoenolpyruvate: step 4/7. In terms of biological role, involved in the biosynthesis of the chorismate, which leads to the biosynthesis of aromatic amino acids. Catalyzes the reversible NADPH linked reduction of 3-dehydroshikimate (DHSA) to yield shikimate (SA). This Blochmanniella pennsylvanica (strain BPEN) protein is Shikimate dehydrogenase (NADP(+)).